The following is a 151-amino-acid chain: MLP-like protein 168 (151 aa).

Belongs to the MLP family.

The chain is MLP-like protein 168 (MLP168) from Arabidopsis thaliana (Mouse-ear cress).